The following is a 237-amino-acid chain: Ribonuclease PH (237 aa).

Residues Arg86 and 124-126 (GTR) contribute to the phosphate site.

This sequence belongs to the RNase PH family. Homohexameric ring arranged as a trimer of dimers.

It carries out the reaction tRNA(n+1) + phosphate = tRNA(n) + a ribonucleoside 5'-diphosphate. In terms of biological role, phosphorolytic 3'-5' exoribonuclease that plays an important role in tRNA 3'-end maturation. Removes nucleotide residues following the 3'-CCA terminus of tRNAs; can also add nucleotides to the ends of RNA molecules by using nucleoside diphosphates as substrates, but this may not be physiologically important. Probably plays a role in initiation of 16S rRNA degradation (leading to ribosome degradation) during starvation. The sequence is that of Ribonuclease PH from Methylorubrum extorquens (strain PA1) (Methylobacterium extorquens).